The primary structure comprises 799 residues: Elongation factor G, mitochondrial (799 aa).

Residues 1 to 33 (MRSPSLARLQTRAVFGLTRSARFQPQTLLRQRC) constitute a mitochondrion transit peptide. The tr-type G domain maps to 97 to 384 (DKCRNIGIAA…GVIDYLPNPA (288 aa)). GTP-binding positions include 106–113 (AHIDSGKT), 182–186 (DTPGH), and 236–239 (NKMD).

Belongs to the TRAFAC class translation factor GTPase superfamily. Classic translation factor GTPase family. EF-G/EF-2 subfamily.

It is found in the mitochondrion. The protein operates within protein biosynthesis; polypeptide chain elongation. In terms of biological role, mitochondrial GTPase that catalyzes the GTP-dependent ribosomal translocation step during translation elongation. During this step, the ribosome changes from the pre-translocational (PRE) to the post-translocational (POST) state as the newly formed A-site-bound peptidyl-tRNA and P-site-bound deacylated tRNA move to the P and E sites, respectively. Catalyzes the coordinated movement of the two tRNA molecules, the mRNA and conformational changes in the ribosome. The polypeptide is Elongation factor G, mitochondrial (mef1) (Penicillium rubens (strain ATCC 28089 / DSM 1075 / NRRL 1951 / Wisconsin 54-1255) (Penicillium chrysogenum)).